The chain runs to 574 residues: Arginine--tRNA ligase (574 aa).

Positions 126–136 (PNIAKRMHVGH) match the 'HIGH' region motif.

The protein belongs to the class-I aminoacyl-tRNA synthetase family. In terms of assembly, monomer.

Its subcellular location is the cytoplasm. It carries out the reaction tRNA(Arg) + L-arginine + ATP = L-arginyl-tRNA(Arg) + AMP + diphosphate. In Chloroflexus aggregans (strain MD-66 / DSM 9485), this protein is Arginine--tRNA ligase.